The primary structure comprises 589 residues: uncharacterized protein (589 aa).

The next 14 helical transmembrane spans lie at 90–110 (YIVI…QTVI), 128–148 (SWIG…CGIM), 162–182 (IVLF…LWLV), 189–209 (GIGG…ITPL), 217–237 (GCMG…GGAI), 245–265 (WIFF…IFFL), 284–304 (FVGI…LNIG), 311–331 (AHAN…GFVV), 355–375 (VMVT…YIPI), 390–410 (VHTL…GMGI), 418–438 (YPMI…IAIY), 448–468 (GFLA…LIAI), 483–503 (AFML…AVIY), and 545–565 (IRTI…LSFF).

Belongs to the major facilitator superfamily. TCR/Tet family.

The protein resides in the membrane. This is an uncharacterized protein from Schizosaccharomyces pombe (strain 972 / ATCC 24843) (Fission yeast).